We begin with the raw amino-acid sequence, 365 residues long: LIM and cysteine-rich domains protein 1 (365 aa).

A Phosphoserine modification is found at Ser16. A PET domain is found at 99–206 (MIMTNPIATG…GEVALPGQGG (108 aa)). The interval 200 to 235 (ALPGQGGLPKEEGKQQEKPEGAETTAATTNGSLSDP) is disordered. Positions 208 to 220 (PKEEGKQQEKPEG) are enriched in basic and acidic residues. 2 LIM zinc-binding domains span residues 241-306 (YVCE…SLRP) and 307-365 (RCSG…SKRS).

As to quaternary structure, interacts with GATA1 and GATA4. Interacts with beta-dystroglycan. Interacts with GATA6. As to expression, expressed in the heart (at protein level). Expressed in many tissues with highest abundance in skeletal muscle.

The protein resides in the cytoplasm. It is found in the nucleus. Transcriptional cofactor that restricts GATA6 function by inhibiting DNA-binding, resulting in repression of GATA6 transcriptional activation of downstream target genes. Represses GATA6-mediated trans activation of lung- and cardiac tissue-specific promoters. Inhibits DNA-binding by GATA4 and GATA1 to the cTNC promoter. Plays a critical role in the development of cardiac hypertrophy via activation of calcineurin/nuclear factor of activated T-cells signaling pathway. The protein is LIM and cysteine-rich domains protein 1 (LMCD1) of Homo sapiens (Human).